The sequence spans 99 residues: EPIDERMAL PATTERNING FACTOR-like protein 8 (99 aa).

The first 35 residues, 1 to 35, serve as a signal peptide directing secretion; that stretch reads MDSSRKYKRCGFGAALFVANIFFSLLSLHCISGAH. 3 cysteine pairs are disulfide-bonded: C53–C90, C57–C63, and C60–C92.

This sequence belongs to the plant cysteine rich small secretory peptide family. Epidermal patterning factor subfamily.

Its subcellular location is the secreted. In terms of biological role, controls stomatal patterning. In Arabidopsis thaliana (Mouse-ear cress), this protein is EPIDERMAL PATTERNING FACTOR-like protein 8.